The primary structure comprises 299 residues: tRNA dimethylallyltransferase (299 aa).

13 to 20 (GATASGKT) lines the ATP pocket. 15–20 (TASGKT) is a substrate binding site. The segment at 38 to 41 (DSRQ) is interaction with substrate tRNA.

This sequence belongs to the IPP transferase family. Monomer. Mg(2+) serves as cofactor.

It catalyses the reaction adenosine(37) in tRNA + dimethylallyl diphosphate = N(6)-dimethylallyladenosine(37) in tRNA + diphosphate. Functionally, catalyzes the transfer of a dimethylallyl group onto the adenine at position 37 in tRNAs that read codons beginning with uridine, leading to the formation of N6-(dimethylallyl)adenosine (i(6)A). In Prochlorococcus marinus (strain MIT 9312), this protein is tRNA dimethylallyltransferase.